Here is a 948-residue protein sequence, read N- to C-terminus: Coatomer subunit beta-1 (948 aa).

HEAT repeat units follow at residues 49–87 (ETIPQLFITIIRYVLPSEDHTIQKLLLLYLELIEKTDSK), 92–126 (PEMILICQNLRNNLQHPNEYIRGVTLRFLCRMKET), 127–164 (EIVEPLTPSVLQNLEHRHPFVRRNAILAIMSIYKLPQG), 274–311 (TAIRAAANTYCQLLLSQSDNNVKLILLDRLYELKTLHR), 312–349 (DIMVELIIDVLRALSSPNLDIRRKTLDISLDLITHHNI), and 391–428 (EVASTVVHLLMDFLGDSNVASALDVVVFVREIIETNPK).

As to quaternary structure, oligomeric complex that consists of at least the alpha, beta, beta', gamma, delta, epsilon and zeta subunits.

It is found in the cytoplasm. Its subcellular location is the golgi apparatus membrane. The protein resides in the cytoplasmic vesicle. The protein localises to the COPI-coated vesicle membrane. The coatomer is a cytosolic protein complex that binds to dilysine motifs and reversibly associates with Golgi non-clathrin-coated vesicles, which further mediate biosynthetic protein transport from the ER, via the Golgi up to the trans Golgi network. Coatomer complex is required for budding from Golgi membranes, and is essential for the retrograde Golgi-to-ER transport of dilysine-tagged proteins. The protein is Coatomer subunit beta-1 of Arabidopsis thaliana (Mouse-ear cress).